The primary structure comprises 152 residues: D-aminoacyl-tRNA deacylase (152 aa).

Residues 137-138 (GP) carry the Gly-cisPro motif, important for rejection of L-amino acids motif.

It belongs to the DTD family. Homodimer.

It localises to the cytoplasm. It carries out the reaction glycyl-tRNA(Ala) + H2O = tRNA(Ala) + glycine + H(+). The enzyme catalyses a D-aminoacyl-tRNA + H2O = a tRNA + a D-alpha-amino acid + H(+). Functionally, an aminoacyl-tRNA editing enzyme that deacylates mischarged D-aminoacyl-tRNAs. Also deacylates mischarged glycyl-tRNA(Ala), protecting cells against glycine mischarging by AlaRS. Acts via tRNA-based rather than protein-based catalysis; rejects L-amino acids rather than detecting D-amino acids in the active site. By recycling D-aminoacyl-tRNA to D-amino acids and free tRNA molecules, this enzyme counteracts the toxicity associated with the formation of D-aminoacyl-tRNA entities in vivo and helps enforce protein L-homochirality. In Methylibium petroleiphilum (strain ATCC BAA-1232 / LMG 22953 / PM1), this protein is D-aminoacyl-tRNA deacylase.